A 439-amino-acid polypeptide reads, in one-letter code: C4-dicarboxylate transport protein 1 (439 aa).

6 helical membrane-spanning segments follow: residues 18-38 (VLYIQVLVAIVLGVIVGWLWP), 56-76 (LIKMVIAPVIFCTVVSGIAHV), 91-111 (IYFEIVSTFALALGLIVANVI), 157-177 (GEILQVLLFSILFGIALMSLG), 193-213 (AIFGVIAIVVKAAPIGAFGAM), and 231-251 (LIATFYLTALAFVIIVLGIIA).

It belongs to the dicarboxylate/amino acid:cation symporter (DAACS) (TC 2.A.23) family.

The protein resides in the cell inner membrane. Functionally, responsible for the transport of dicarboxylates such as succinate, fumarate, and malate from the periplasm across the membrane. This Bradyrhizobium sp. (strain ORS 278) protein is C4-dicarboxylate transport protein 1.